The primary structure comprises 105 residues: Small ribosomal subunit protein uS10 (105 aa).

This sequence belongs to the universal ribosomal protein uS10 family. As to quaternary structure, part of the 30S ribosomal subunit.

In terms of biological role, involved in the binding of tRNA to the ribosomes. The chain is Small ribosomal subunit protein uS10 from Desulfovibrio desulfuricans (strain ATCC 27774 / DSM 6949 / MB).